Here is a 121-residue protein sequence, read N- to C-terminus: Large ribosomal subunit protein bL12 (121 aa).

The protein belongs to the bacterial ribosomal protein bL12 family. As to quaternary structure, homodimer. Part of the ribosomal stalk of the 50S ribosomal subunit. Forms a multimeric L10(L12)X complex, where L10 forms an elongated spine to which 2 to 4 L12 dimers bind in a sequential fashion. Binds GTP-bound translation factors.

Forms part of the ribosomal stalk which helps the ribosome interact with GTP-bound translation factors. Is thus essential for accurate translation. This Limosilactobacillus fermentum (strain NBRC 3956 / LMG 18251) (Lactobacillus fermentum) protein is Large ribosomal subunit protein bL12.